The chain runs to 354 residues: 3-isopropylmalate dehydrogenase (354 aa).

Position 73–86 (73–86) interacts with NAD(+); sequence GPAYDKLDRPLRPE. Residues arginine 93, arginine 103, arginine 131, and aspartate 221 each contribute to the substrate site. Residues aspartate 221, aspartate 245, and aspartate 249 each coordinate Mg(2+). 279–291 serves as a coordination point for NAD(+); the sequence is GSAPDIAGQNLAN.

It belongs to the isocitrate and isopropylmalate dehydrogenases family. LeuB type 1 subfamily. As to quaternary structure, homodimer. It depends on Mg(2+) as a cofactor. Mn(2+) serves as cofactor.

It localises to the cytoplasm. The catalysed reaction is (2R,3S)-3-isopropylmalate + NAD(+) = 4-methyl-2-oxopentanoate + CO2 + NADH. It functions in the pathway amino-acid biosynthesis; L-leucine biosynthesis; L-leucine from 3-methyl-2-oxobutanoate: step 3/4. Its function is as follows. Catalyzes the oxidation of 3-carboxy-2-hydroxy-4-methylpentanoate (3-isopropylmalate) to 3-carboxy-4-methyl-2-oxopentanoate. The product decarboxylates to 4-methyl-2 oxopentanoate. The sequence is that of 3-isopropylmalate dehydrogenase from Chromobacterium violaceum (strain ATCC 12472 / DSM 30191 / JCM 1249 / CCUG 213 / NBRC 12614 / NCIMB 9131 / NCTC 9757 / MK).